The chain runs to 292 residues: Nucleophosmin (292 aa).

Met-1 is subject to N-acetylmethionine. The necessary for interaction with APEX1 stretch occupies residues 1 to 117; it reads MEDSMDMDMS…PVHISGQHLV (117 aa). The interval 1–185 is required for interaction with SENP3; the sequence is MEDSMDMDMS…DDDDFDEEET (185 aa). At Ser-4 the chain carries Phosphoserine; by PLK1 and PLK2. Ser-10 carries the post-translational modification Phosphoserine. Lys-27 is covalently cross-linked (Glycyl lysine isopeptide (Lys-Gly) (interchain with G-Cter in SUMO2)). Residue Lys-32 is modified to N6-acetyllysine; alternate. Lys-32 is covalently cross-linked (Glycyl lysine isopeptide (Lys-Gly) (interchain with G-Cter in SUMO1); alternate). A Glycyl lysine isopeptide (Lys-Gly) (interchain with G-Cter in SUMO2); alternate cross-link involves residue Lys-32. At Ser-43 the chain carries Phosphoserine. Residue Tyr-67 is modified to Phosphotyrosine. Position 70 is a phosphoserine (Ser-70). Residues Thr-75 and Thr-95 each carry the phosphothreonine modification. 2 positions are modified to phosphoserine: Ser-125 and Ser-139. Residues 138–248 form a disordered region; that stretch reads MSGKRSAPGG…PSSVEDIKAK (111 aa). A Glycyl lysine isopeptide (Lys-Gly) (interchain with G-Cter in SUMO2) cross-link involves residue Lys-141. Lys-150 is modified (N6-acetyllysine; alternate). Residue Lys-150 forms a Glycyl lysine isopeptide (Lys-Gly) (interchain with G-Cter in SUMO2); alternate linkage. The short motif at 152–157 is the Nuclear localization signal element; the sequence is PQKKVK. Residue Lys-154 is modified to N6-acetyllysine. Over residues 159–186 the composition is skewed to acidic residues; sequence DEDDEDDDEDDEDDEDDDDDDFDEEETE. Residues 186-214 are interaction with NOP2; it reads EEKVPVKKSVRDTPAKNAQKSNQNGKDLK. A compositionally biased stretch (basic and acidic residues) spans 187-199; that stretch reads EKVPVKKSVRDTP. Residues 190–196 carry the Nuclear localization signal motif; sequence PVKKSVR. The residue at position 198 (Thr-198) is a Phosphothreonine; by CDK1 and CDK2. Polar residues predominate over residues 201-210; sequence KNAQKSNQNG. An ADP-ribosylserine modification is found at Ser-206. At Lys-211 the chain carries N6-acetyllysine. Lys-214 participates in a covalent cross-link: Glycyl lysine isopeptide (Lys-Gly) (interchain with G-Cter in SUMO2). Residue Thr-217 is modified to Phosphothreonine; by CDK1. Residues 221 to 233 show a composition bias toward basic and acidic residues; it reads KGQESFKKQEKTP. Ser-225 carries the phosphoserine modification. Lys-227 carries the N6-acetyllysine modification. Position 228 is an N6-acetyllysine; alternate (Lys-228). Lys-228 is covalently cross-linked (Glycyl lysine isopeptide (Lys-Gly) (interchain with G-Cter in SUMO); alternate). Phosphothreonine; by CDK1 occurs at positions 232 and 235. Phosphoserine occurs at positions 240 and 241. Positions 241 to 292 are required for nucleolar localization; the sequence is SVEDIKAKMQASIEKGGSLPKVEAKFINYVKNCFRMTDQEAIQDLWQWRKSL. Lys-246 is covalently cross-linked (Glycyl lysine isopeptide (Lys-Gly) (interchain with G-Cter in SUMO1); alternate). Residues Lys-246 and Lys-248 each participate in a glycyl lysine isopeptide (Lys-Gly) (interchain with G-Cter in SUMO2); alternate cross-link. The residue at position 248 (Lys-248) is an N6-acetyllysine; alternate. Phosphoserine is present on Ser-252. The residue at position 255 (Lys-255) is an N6-acetyllysine; alternate. Lys-255 participates in a covalent cross-link: Glycyl lysine isopeptide (Lys-Gly) (interchain with G-Cter in SUMO1); alternate. Lys-255 is covalently cross-linked (Glycyl lysine isopeptide (Lys-Gly) (interchain with G-Cter in SUMO2); alternate). Position 258 is a phosphoserine (Ser-258). Residues Lys-261, Lys-265, and Lys-271 each participate in a glycyl lysine isopeptide (Lys-Gly) (interchain with G-Cter in SUMO2); alternate cross-link. Lys-261 is covalently cross-linked (Glycyl lysine isopeptide (Lys-Gly) (interchain with G-Cter in SUMO); alternate). An N6-acetyllysine; alternate mark is found at Lys-265 and Lys-271. A Glycyl lysine isopeptide (Lys-Gly) (interchain with G-Cter in SUMO1); alternate cross-link involves residue Lys-265. Lys-265 carries the N6-succinyllysine; alternate modification. Thr-277 is subject to Phosphothreonine. Position 290 is an N6-acetyllysine (Lys-290).

This sequence belongs to the nucleoplasmin family. As to quaternary structure, decamer formed by two pentameric rings associated in a head-to-head fashion. Disulfide-linked dimers under certain conditions. Interacts with NSUN2 and SENP3. The SWAP complex consists of NPM1, NCL, PARP1 and SWAP70. Interacts with the methylated form of RPS10. Interacts (via N-terminal domain) with APEX1; the interaction is RNA-dependent and decreases peroxide-damaged cells. Interacts with NEK2. Interacts with ROCK2 and BRCA2. Interacts with RPGR. Interacts with CENPW. Interacts with EIF2AK2/PKR. Interacts with DDX31; this interaction prevents interaction between NPM1 and HDM2. Interacts with MYC; competitive with NOP53. Interacts with NOP53; the interaction is direct and competitive with MYC. Interacts with LRRC34. Interacts with RRP1B. Interacts with NPM3. Interacts with ALKBH2. Interacts with TTF1 (via C-terminal region). Interacts with NOP2. Interacts with ARID3C (via REKLES DOMAIN); the interaction mediates ARID3C nuclear shuttling. Post-translationally, acetylated at C-terminal lysine residues, thereby increasing affinity to histones. ADP-ribosylated. In terms of processing, phosphorylated at Ser-4 by PLK1 and PLK2. Phosphorylation at Ser-4 by PLK2 in S phase is required for centriole duplication and is sufficient to trigger centriole replication. Phosphorylation at Ser-4 by PLK1 takes place during mitosis. Phosphorylated by CDK2 at Ser-125 and Thr-198. Phosphorylation at Thr-198 may trigger initiation of centrosome duplication. Phosphorylated by CDK1 at Thr-198, Thr-217, Thr-232 and Thr-235 during cell mitosis. When these four sites are phosphorated, RNA-binding activity seem to be abolished. May be phosphorylated at Ser-70 by NEK2. The Thr-198 phosphorylated form has higher affinity for ROCK2. Post-translationally, sumoylated by ARF. Ubiquitinated. Ubiquitination leads to proteasomal degradation. Deubiquitinated by USP36. As to expression, expressed in B-cells that have been induced to switch to various Ig isotypes.

It is found in the nucleus. The protein localises to the nucleolus. The protein resides in the nucleoplasm. It localises to the cytoplasm. Its subcellular location is the cytoskeleton. It is found in the microtubule organizing center. The protein localises to the centrosome. Involved in diverse cellular processes such as ribosome biogenesis, centrosome duplication, protein chaperoning, histone assembly, cell proliferation, and regulation of tumor suppressors p53/TP53 and ARF. Binds ribosome presumably to drive ribosome nuclear export. Associated with nucleolar ribonucleoprotein structures and bind single-stranded nucleic acids. Acts as a chaperonin for the core histones H3, H2B and H4. Stimulates APEX1 endonuclease activity on apurinic/apyrimidinic (AP) double-stranded DNA but inhibits APEX1 endonuclease activity on AP single-stranded RNA. May exert a control of APEX1 endonuclease activity within nucleoli devoted to repair AP on rDNA and the removal of oxidized rRNA molecules. In concert with BRCA2, regulates centrosome duplication. Regulates centriole duplication: phosphorylation by PLK2 is able to trigger centriole replication. Negatively regulates the activation of EIF2AK2/PKR and suppresses apoptosis through inhibition of EIF2AK2/PKR autophosphorylation. Antagonizes the inhibitory effect of ATF5 on cell proliferation and relieves ATF5-induced G2/M blockade. In complex with MYC enhances the transcription of MYC target genes. May act as chaperonin or cotransporter in the nucleolar localization of transcription termination factor TTF1. This chain is Nucleophosmin (Npm1), found in Mus musculus (Mouse).